A 190-amino-acid chain; its full sequence is Xanthine phosphoribosyltransferase (190 aa).

Xanthine-binding residues include L20 and N27. 128–132 (ANGHA) is a 5-phospho-alpha-D-ribose 1-diphosphate binding site. K156 provides a ligand contact to xanthine.

The protein belongs to the purine/pyrimidine phosphoribosyltransferase family. Xpt subfamily. Homodimer.

It is found in the cytoplasm. It carries out the reaction XMP + diphosphate = xanthine + 5-phospho-alpha-D-ribose 1-diphosphate. It participates in purine metabolism; XMP biosynthesis via salvage pathway; XMP from xanthine: step 1/1. In terms of biological role, converts the preformed base xanthine, a product of nucleic acid breakdown, to xanthosine 5'-monophosphate (XMP), so it can be reused for RNA or DNA synthesis. The polypeptide is Xanthine phosphoribosyltransferase (Pseudomonas aeruginosa (strain LESB58)).